A 1025-amino-acid polypeptide reads, in one-letter code: RNA cytidine acetyltransferase (1025 aa).

287-296 lines the ATP pocket; that stretch reads GRGKSAALGL. An N6-acetyllysine modification is found at Lys426. Arg470 contacts ATP. The region spanning 558–753 is the N-acetyltransferase domain; the sequence is CLLPPVPPTQ…HSCIMLKTLT (196 aa). Residues 629-631 and 636-642 each bind acetyl-CoA; these read IAV and QGMGYGS. The segment at 702–1025 is required for localization to the nucleolus and midbody; that stretch reads PAERLDYLGV…KKDMKLKRKK (324 aa). Thr716 carries the post-translational modification Phosphothreonine. Arg725 contacts acetyl-CoA. A phosphoserine mark is found at Ser934, Ser984, and Ser987. The tract at residues 990 to 1025 is disordered; sequence SDKKRKLEAKQEPKQSKKLKNRETKNKKDMKLKRKK. The segment covering 997-1018 has biased composition (basic and acidic residues); sequence EAKQEPKQSKKLKNRETKNKKD.

The protein belongs to the RNA cytidine acetyltransferase family. NAT10 subfamily. As to quaternary structure, part of the small subunit (SSU) processome, composed of more than 70 proteins and the RNA chaperone small nucleolar RNA (snoRNA) U3. Interacts with THUMPD1. Interacts with SUN1 (via N-terminus). Interacts with TERT. In terms of processing, acetylation at Lys-426 is required to activation of rRNA transcription. May be autoacetylated; however ability to autoacetylate in vivo requires additional evidences.

The protein resides in the nucleus. It localises to the nucleolus. The protein localises to the midbody. It carries out the reaction a cytidine in 18S rRNA + acetyl-CoA + ATP + H2O = an N(4)-acetylcytidine in 18S rRNA + ADP + phosphate + CoA + H(+). The catalysed reaction is a cytidine in tRNA + acetyl-CoA + ATP + H2O = an N(4)-acetylcytidine in tRNA + ADP + phosphate + CoA + H(+). The enzyme catalyses a cytidine in mRNA + acetyl-CoA + ATP + H2O = an N(4)-acetylcytidine in mRNA + ADP + phosphate + CoA + H(+). Its activity is regulated as follows. Specifically inhibited by remodelin (4-[2-(2-cyclopentylidenehydrazinyl)-4-thiazolyl]-benzonitrile, monohydrobromide), a hydrobromide salt molecule. Remodelin can improve nuclear architecture, chromatin organization and fitness of cells from patients suffering from Hutchinson-Gilford progeria syndrome (HGPS); molecular mechanisms explaining the relation between NAT10 activity and nuclear architecture are however unclear. RNA cytidine acetyltransferase that catalyzes the formation of N(4)-acetylcytidine (ac4C) modification on mRNAs, 18S rRNA and tRNAs. Catalyzes ac4C modification of a broad range of mRNAs, enhancing mRNA stability and translation. mRNA ac4C modification is frequently present within wobble cytidine sites and promotes translation efficiency. Mediates the formation of ac4C at position 1842 in 18S rRNA. May also catalyze the formation of ac4C at position 1337 in 18S rRNA. Required for early nucleolar cleavages of precursor rRNA at sites A0, A1 and A2 during 18S rRNA synthesis. Catalyzes the formation of ac4C in serine and leucine tRNAs. Requires the tRNA-binding adapter protein THUMPD1 for full tRNA acetyltransferase activity but not for 18S rRNA acetylation. In addition to RNA acetyltransferase activity, also able to acetylate lysine residues of proteins, such as histones, microtubules, p53/TP53 and MDM2, in vitro. The relevance of the protein lysine acetyltransferase activity is however unsure in vivo. Activates telomerase activity by stimulating the transcription of TERT, and may also regulate telomerase function by affecting the balance of telomerase subunit assembly, disassembly, and localization. Involved in the regulation of centrosome duplication by acetylating CENATAC during mitosis, promoting SASS6 proteasome degradation. Part of the small subunit (SSU) processome, first precursor of the small eukaryotic ribosomal subunit. During the assembly of the SSU processome in the nucleolus, many ribosome biogenesis factors, an RNA chaperone and ribosomal proteins associate with the nascent pre-rRNA and work in concert to generate RNA folding, modifications, rearrangements and cleavage as well as targeted degradation of pre-ribosomal RNA by the RNA exosome. This Homo sapiens (Human) protein is RNA cytidine acetyltransferase.